A 131-amino-acid polypeptide reads, in one-letter code: Small ribosomal subunit protein uS11 (131 aa).

This sequence belongs to the universal ribosomal protein uS11 family. As to quaternary structure, part of the 30S ribosomal subunit. Interacts with proteins S7 and S18. Binds to IF-3. Interacts with VmlR. Interacts with BrxC.

In terms of biological role, located on the platform of the 30S subunit, it bridges several disparate RNA helices of the 16S rRNA. Forms part of the Shine-Dalgarno cleft in the 70S ribosome. The polypeptide is Small ribosomal subunit protein uS11 (Bacillus subtilis (strain 168)).